Reading from the N-terminus, the 321-residue chain is Glucokinase (321 aa).

An ATP-binding site is contributed by 8–13 (GDVGGT).

Belongs to the bacterial glucokinase family.

The protein resides in the cytoplasm. The catalysed reaction is D-glucose + ATP = D-glucose 6-phosphate + ADP + H(+). The protein is Glucokinase of Erwinia tasmaniensis (strain DSM 17950 / CFBP 7177 / CIP 109463 / NCPPB 4357 / Et1/99).